A 949-amino-acid chain; its full sequence is AP-1 complex subunit beta-1 (949 aa).

An N6-acetyllysine modification is found at Lys-318. Residue Tyr-574 is modified to 3'-nitrotyrosine. The segment at 592–623 is disordered; it reads SLPPRTASSESTESPEAAPAGAPASDQPDVIP. The segment covering 594 to 616 has biased composition (low complexity); sequence PPRTASSESTESPEAAPAGAPAS.

Belongs to the adaptor complexes large subunit family. In terms of assembly, adaptor protein complex 1 (AP-1) is a heterotetramer composed of two large adaptins (gamma-type subunit AP1G1 and beta-type subunit AP1B1), a medium adaptin (mu-type subunit AP1M1 or AP1M2) and a small adaptin (sigma-type subunit AP1S1 or AP1S2 or AP1S3). The N-terminus is blocked.

It is found in the golgi apparatus. The protein localises to the cytoplasmic vesicle. It localises to the clathrin-coated vesicle membrane. In terms of biological role, subunit of clathrin-associated adaptor protein complex 1 that plays a role in protein sorting in the late-Golgi/trans-Golgi network (TGN) and/or endosomes. The AP complexes mediate both the recruitment of clathrin to membranes and the recognition of sorting signals within the cytosolic tails of transmembrane cargo molecules. This is AP-1 complex subunit beta-1 (Ap1b1) from Rattus norvegicus (Rat).